We begin with the raw amino-acid sequence, 494 residues long: Probable cytosol aminopeptidase (494 aa).

Mn(2+)-binding residues include Lys-260 and Asp-265. The active site involves Lys-272. Mn(2+) contacts are provided by Asp-283, Asp-342, and Glu-344. Arg-346 is a catalytic residue.

The protein belongs to the peptidase M17 family. Mn(2+) serves as cofactor.

It localises to the cytoplasm. It catalyses the reaction Release of an N-terminal amino acid, Xaa-|-Yaa-, in which Xaa is preferably Leu, but may be other amino acids including Pro although not Arg or Lys, and Yaa may be Pro. Amino acid amides and methyl esters are also readily hydrolyzed, but rates on arylamides are exceedingly low.. The enzyme catalyses Release of an N-terminal amino acid, preferentially leucine, but not glutamic or aspartic acids.. Functionally, presumably involved in the processing and regular turnover of intracellular proteins. Catalyzes the removal of unsubstituted N-terminal amino acids from various peptides. The chain is Probable cytosol aminopeptidase from Bacillus thuringiensis (strain Al Hakam).